The chain runs to 239 residues: MVIKAQSPAGFAEEYIVESIWNNRFPPGSILPAERELSELIGVTRTTLREVLQRLARDGWLTIQHGKPTKVNNFWETSGLNILETVARLDHDRVPQLIDNLLAVRTNISAIFIRTAFKNNPEKSLEVLTHQLTTENSADEFSELDYNIFRGLAFASGNPIYGLILNGLKGLYTRVGRYYFSNVQAKELALSFYKKLALLCEQKDTEHVMDCVRQYGKESGIIWHELQSPLPSDLEEVKR.

Residues 6–74 form the HTH gntR-type domain; it reads QSPAGFAEEY…HGKPTKVNNF (69 aa). The segment at residues 34 to 53 is a DNA-binding region (H-T-H motif); the sequence is ERELSELIGVTRTTLREVLQ.

Homodimer.

The protein localises to the cytoplasm. Functionally, multifunctional regulator of fatty acid metabolism. The chain is Fatty acid metabolism regulator protein from Proteus mirabilis (strain HI4320).